The primary structure comprises 93 residues: MKNKLKSALSFFTTLSNTVKQANKDIDAAKLKLTTEIAAIGVIKTETETTRFYVDYDDLMLSLLKEAAQKMINTCNEYQKRHGKKTLFEIPEV.

It belongs to the hemolysin E family.

The sequence is that of Putative hemolysin E-like protein from Escherichia coli O6:H1 (strain CFT073 / ATCC 700928 / UPEC).